The primary structure comprises 510 residues: Chromosomal replication initiator protein DnaA (510 aa).

The tract at residues 1 to 107 is domain I, interacts with DnaA modulators; it reads MTNDPGSGFA…VRIAPPPADD (107 aa). The domain II stretch occupies residues 107–169; the sequence is DDDDSVAAAV…ADTSASAGGT (63 aa). Residues 119-168 form a disordered region; it reads PGLEASPETSQEVSDEIDDFGENAPNSRQSWPTHFKKRSTDADTSASAGG. Residues 170–386 form a domain III, AAA+ region region; it reads SLNRRYTFDT…GALIRVTAFA (217 aa). ATP is bound by residues Gly214, Gly216, Lys217, and Thr218. The segment at 387–510 is domain IV, binds dsDNA; the sequence is SLNKTPIDKA…TTRIRQRSKR (124 aa).

This sequence belongs to the DnaA family. Oligomerizes as a right-handed, spiral filament on DNA at oriC.

Its subcellular location is the cytoplasm. Plays an essential role in the initiation and regulation of chromosomal replication. ATP-DnaA binds to the origin of replication (oriC) to initiate formation of the DNA replication initiation complex once per cell cycle. Binds the DnaA box (a 9 base pair repeat at the origin) and separates the double-stranded (ds)DNA. Forms a right-handed helical filament on oriC DNA; dsDNA binds to the exterior of the filament while single-stranded (ss)DNA is stabiized in the filament's interior. The ATP-DnaA-oriC complex binds and stabilizes one strand of the AT-rich DNA unwinding element (DUE), permitting loading of DNA polymerase. After initiation quickly degrades to an ADP-DnaA complex that is not apt for DNA replication. Binds acidic phospholipids. The polypeptide is Chromosomal replication initiator protein DnaA (Mycobacterium marinum (strain ATCC BAA-535 / M)).